The chain runs to 454 residues: tRNA modification GTPase MnmE (454 aa).

(6S)-5-formyl-5,6,7,8-tetrahydrofolate contacts are provided by R23, E80, and K120. In terms of domain architecture, TrmE-type G spans 216–377 (GMKVVIAGRP…LRDHLKQSMG (162 aa)). N226 serves as a coordination point for K(+). GTP contacts are provided by residues 226–231 (NAGKSS), 245–251 (TAIAGTT), 270–273 (DTAG), 335–338 (NKAD), and 358–360 (SAR). S230 serves as a coordination point for Mg(2+). 3 residues coordinate K(+): T245, I247, and T250. T251 provides a ligand contact to Mg(2+). Residue K454 participates in (6S)-5-formyl-5,6,7,8-tetrahydrofolate binding.

Belongs to the TRAFAC class TrmE-Era-EngA-EngB-Septin-like GTPase superfamily. TrmE GTPase family. Homodimer. Heterotetramer of two MnmE and two MnmG subunits. It depends on K(+) as a cofactor.

Its subcellular location is the cytoplasm. Exhibits a very high intrinsic GTPase hydrolysis rate. Involved in the addition of a carboxymethylaminomethyl (cmnm) group at the wobble position (U34) of certain tRNAs, forming tRNA-cmnm(5)s(2)U34. This is tRNA modification GTPase MnmE from Pectobacterium atrosepticum (strain SCRI 1043 / ATCC BAA-672) (Erwinia carotovora subsp. atroseptica).